The chain runs to 115 residues: Transcriptional regulator protein FixT (115 aa).

As to quaternary structure, interacts directly with FixL.

Its function is as follows. Prevents transcription of the intermediate key regulatory genes nifA and fixK by counteracting the activity of the FixLJ two-component system. Acts as an inhibitor of the sensor hemoprotein kinase fixL, preventing the production or the accumulation of its phosphorylated form. This is Transcriptional regulator protein FixT (fixT) from Rhizobium meliloti (strain 1021) (Ensifer meliloti).